A 252-amino-acid polypeptide reads, in one-letter code: 5-oxoprolinase subunit A (252 aa).

The protein belongs to the LamB/PxpA family. As to quaternary structure, forms a complex composed of PxpA, PxpB and PxpC.

The enzyme catalyses 5-oxo-L-proline + ATP + 2 H2O = L-glutamate + ADP + phosphate + H(+). Its function is as follows. Catalyzes the cleavage of 5-oxoproline to form L-glutamate coupled to the hydrolysis of ATP to ADP and inorganic phosphate. The polypeptide is 5-oxoprolinase subunit A (Mycobacterium ulcerans (strain Agy99)).